Consider the following 348-residue polypeptide: D-alanine--D-alanine ligase (348 aa).

An ATP-grasp domain is found at 132–334; it reads KRVLESAGIP…YAELIEELVR (203 aa). Residue 162–217 participates in ATP binding; that stretch reads EAALSYPVFVKPANMGSSVGISKAESEEELRAAILLALTYDSRILIEQGVLAREIE. Mg(2+)-binding residues include aspartate 288, glutamate 301, and asparagine 303.

The protein belongs to the D-alanine--D-alanine ligase family. It depends on Mg(2+) as a cofactor. Requires Mn(2+) as cofactor.

The protein resides in the cytoplasm. The catalysed reaction is 2 D-alanine + ATP = D-alanyl-D-alanine + ADP + phosphate + H(+). It functions in the pathway cell wall biogenesis; peptidoglycan biosynthesis. Functionally, cell wall formation. The sequence is that of D-alanine--D-alanine ligase from Streptococcus equi subsp. zooepidemicus (strain H70).